The primary structure comprises 151 residues: Ribonuclease H (151 aa).

The RNase H type-1 domain occupies 5 to 146; sequence ALPHVTIFTD…ADQLAREGVA (142 aa). The Mg(2+) site is built by Asp14, Glu52, Asp74, and Asp138.

Belongs to the RNase H family. Monomer. Mg(2+) serves as cofactor.

It is found in the cytoplasm. It catalyses the reaction Endonucleolytic cleavage to 5'-phosphomonoester.. Functionally, endonuclease that specifically degrades the RNA of RNA-DNA hybrids. This Nitrobacter hamburgensis (strain DSM 10229 / NCIMB 13809 / X14) protein is Ribonuclease H.